A 142-amino-acid polypeptide reads, in one-letter code: DNA polymerase III subunit chi (142 aa).

This sequence belongs to the DNA polymerase III chi/HolC chain family. As to quaternary structure, DNA polymerase III contains a core (composed of alpha, epsilon and theta chains) that associates with a tau subunit. This core dimerizes to form the POLIII' complex. PolIII' associates with the gamma complex (composed of gamma, delta, delta', psi and chi chains) and with the beta chain to form the complete DNA polymerase III complex. Interacts directly with the psi subunit (holD). The only subunit of the DNA polymerase III holoenzyme known to interact with single-stranded DNA binding protein (SSB).

It catalyses the reaction DNA(n) + a 2'-deoxyribonucleoside 5'-triphosphate = DNA(n+1) + diphosphate. Its function is as follows. Part of the beta sliding clamp loading complex, which hydrolyzes ATP to load the beta clamp onto primed DNA to form the DNA replication pre-initiation complex. DNA polymerase III is a complex, multichain enzyme responsible for most of the replicative synthesis in bacteria. This DNA polymerase also exhibits 3' to 5' exonuclease activity. The polypeptide is DNA polymerase III subunit chi (Pseudomonas aeruginosa (strain ATCC 15692 / DSM 22644 / CIP 104116 / JCM 14847 / LMG 12228 / 1C / PRS 101 / PAO1)).